The chain runs to 111 residues: Toxin 3FTx-Tri3 (111 aa).

An N-terminal signal peptide occupies residues 1-19 (MKTLLLALVVVAFMCLGSA). Positions 20–34 (DEVGLGNEQIDRGRR) are excised as a propeptide. Gln35 is modified (pyrrolidone carboxylic acid). 4 disulfides stabilise this stretch: Cys44/Cys68, Cys47/Cys87, Cys91/Cys102, and Cys103/Cys108.

It belongs to the three-finger toxin family. Ancestral subfamily. Boigatoxin sub-subfamily. As to expression, expressed by the venom gland.

The protein resides in the secreted. Its function is as follows. Potent postsynaptic neurotoxin. Displays readily reversible competitive antagonism at the nicotinic acetylcholine receptor (nAChR). The protein is Toxin 3FTx-Tri3 of Trimorphodon biscutatus (Western lyre snake).